The sequence spans 318 residues: tRNA U34 carboxymethyltransferase (318 aa).

7 residues coordinate carboxy-S-adenosyl-L-methionine: K88, W102, K107, G126, M192, Y196, and R311.

Belongs to the class I-like SAM-binding methyltransferase superfamily. CmoB family. As to quaternary structure, homotetramer.

The enzyme catalyses carboxy-S-adenosyl-L-methionine + 5-hydroxyuridine(34) in tRNA = 5-carboxymethoxyuridine(34) in tRNA + S-adenosyl-L-homocysteine + H(+). Catalyzes carboxymethyl transfer from carboxy-S-adenosyl-L-methionine (Cx-SAM) to 5-hydroxyuridine (ho5U) to form 5-carboxymethoxyuridine (cmo5U) at position 34 in tRNAs. This is tRNA U34 carboxymethyltransferase from Pseudomonas fluorescens (strain ATCC BAA-477 / NRRL B-23932 / Pf-5).